The following is a 223-amino-acid chain: uncharacterized protein (223 aa).

The first 22 residues, 1-22 (MHLKKALCPALCTFLIHLCLHA), serve as a signal peptide directing secretion. The VWFA domain maps to 30-204 (DIFLMIDKSR…RSIAAAHSKR (175 aa)). The disordered stretch occupies residues 199–223 (AAHSKRPTPTPPAKESSPRYTPSLD).

This is an uncharacterized protein from Treponema pallidum (strain Nichols).